The following is a 367-amino-acid chain: Apurinic-apyrimidinic endonuclease 1 (367 aa).

The Zn(2+) site is built by histidine 83, histidine 123, glutamate 158, aspartate 192, histidine 195, histidine 229, aspartate 242, histidine 244, and glutamate 274. A disordered region spans residues 312 to 367 (DTLQKLGAKSRKEQLDKFEVKQKKRAGGTKRKKATAEPSDNDILSQMTKKRKTKKE). Over residues 321-332 (SRKEQLDKFEVK) the composition is skewed to basic and acidic residues. The span at 333–344 (QKKRAGGTKRKK) shows a compositional bias: basic residues. Serine 356 is subject to Phosphoserine.

The protein belongs to the AP endonuclease 2 family. Monomer. Zn(2+) serves as cofactor.

It localises to the nucleus. DNA repair enzyme that cleaves apurinic/apyrimidinic (AP) sites and removes 3'-blocking groups present at single strand breaks of damaged DNA. APN1 accounts for &gt; 97% of both apurinic/apyrimidinic (AP) endonuclease and DNA 3'-repair diesterase activities. In Saccharomyces cerevisiae (strain ATCC 204508 / S288c) (Baker's yeast), this protein is Apurinic-apyrimidinic endonuclease 1 (APN1).